Consider the following 306-residue polypeptide: Protein-methionine-sulfoxide reductase catalytic subunit MsrP (306 aa).

Residues 1–44 constitute a signal peptide (tat-type signal); that stretch reads MLIRHAPDLTDNDVTGHGLYLRRRDFIGGAAGLGLMAAAGSASA. Mo-molybdopterin-binding positions include Asn69, 72–73, Cys127, Thr162, Asn210, Arg215, and 226–228; these read YE and GIK.

Belongs to the MsrP family. As to quaternary structure, heterodimer of a catalytic subunit (MsrP) and a heme-binding subunit (MsrQ). Requires Mo-molybdopterin as cofactor. Predicted to be exported by the Tat system. The position of the signal peptide cleavage has not been experimentally proven.

It is found in the periplasm. It carries out the reaction L-methionyl-[protein] + a quinone + H2O = L-methionyl-(S)-S-oxide-[protein] + a quinol. The catalysed reaction is L-methionyl-[protein] + a quinone + H2O = L-methionyl-(R)-S-oxide-[protein] + a quinol. Part of the MsrPQ system that repairs oxidized periplasmic proteins containing methionine sulfoxide residues (Met-O), using respiratory chain electrons. Thus protects these proteins from oxidative-stress damage caused by reactive species of oxygen and chlorine generated by the host defense mechanisms. MsrPQ is essential for the maintenance of envelope integrity under bleach stress, rescuing a wide series of structurally unrelated periplasmic proteins from methionine oxidation. The catalytic subunit MsrP is non-stereospecific, being able to reduce both (R-) and (S-) diastereoisomers of methionine sulfoxide. The polypeptide is Protein-methionine-sulfoxide reductase catalytic subunit MsrP (Caulobacter sp. (strain K31)).